We begin with the raw amino-acid sequence, 73 residues long: Conotoxin CnIIIG (73 aa).

The signal sequence occupies residues 1–19 (MSKLGVLLTICLLLLPLTA). A propeptide spanning residues 20-48 (LPMDEDQPADQPADRMQDDISSEQYPLFD) is cleaved from the precursor. Gln51 carries the pyrrolidone carboxylic acid modification. 3 cysteine pairs are disulfide-bonded: Cys53–Cys72, Cys54–Cys70, and Cys60–Cys73.

The protein belongs to the conotoxin M superfamily. As to expression, expressed by the venom duct.

The protein resides in the secreted. In terms of biological role, shows a paralytic effect in fish. The sequence is that of Conotoxin CnIIIG from Conus consors (Singed cone).